Here is a 147-residue protein sequence, read N- to C-terminus: UPF0306 protein YhbP (147 aa).

This sequence belongs to the UPF0306 family.

This chain is UPF0306 protein YhbP, found in Escherichia coli O8 (strain IAI1).